The primary structure comprises 743 residues: Polyribonucleotide nucleotidyltransferase (743 aa).

The Mg(2+) site is built by Asp489 and Asp495. Residues 556–618 (PRIEKMHIGK…PCIDAAIGMI (63 aa)) form the KH domain. The 71-residue stretch at 628-698 (GETYPGKITS…KTGKFKLSRK (71 aa)) folds into the S1 motif domain. Positions 704-743 (PEGYVEPQPRERRERREGGREGGRNFERRGGDRDHREPRG) are disordered.

The protein belongs to the polyribonucleotide nucleotidyltransferase family. Mg(2+) serves as cofactor.

It localises to the cytoplasm. It carries out the reaction RNA(n+1) + phosphate = RNA(n) + a ribonucleoside 5'-diphosphate. In terms of biological role, involved in mRNA degradation. Catalyzes the phosphorolysis of single-stranded polyribonucleotides processively in the 3'- to 5'-direction. The chain is Polyribonucleotide nucleotidyltransferase from Porphyromonas gingivalis (strain ATCC 33277 / DSM 20709 / CIP 103683 / JCM 12257 / NCTC 11834 / 2561).